The chain runs to 310 residues: Vomeronasal type-1 receptor 47 (310 aa).

The Extracellular portion of the chain corresponds to 1–16; it reads MNENSRLHTHSNIRNT. The chain crosses the membrane as a helical span at residues 17 to 37; it reads FFSEIGIGISGNSFLLLFHII. The Cytoplasmic portion of the chain corresponds to 38 to 49; sequence KFFRGHRPRLTD. A helical transmembrane segment spans residues 50-70; it reads LPIGLLSLIHLLMLLVAAVIA. Residues 71–91 are Extracellular-facing; sequence TDIFISWRGWNDIICKFLVYL. Cysteines 85 and 172 form a disulfide. Residues 92–114 traverse the membrane as a helical segment; that stretch reads YRSLRGLSLCTTSMLSVLQAIIL. Residues 115-131 are Cytoplasmic-facing; the sequence is SPRSYCLAKFKRKSSHN. Residues 132–152 form a helical membrane-spanning segment; it reads ISCAIIFLSVLYMSISSHLFI. Over 153-193 the chain is Extracellular; that stretch reads SITATLNLTMNNFLYVSQSCSLLPLSYLMQSMYSTLLVLRE. Asparagine 159 carries N-linked (GlcNAc...) asparagine glycosylation. The helical transmembrane segment at 194–214 threads the bilayer; sequence VFLIGLMVLSTSYMVALLCMH. At 215–238 the chain is on the cytoplasmic side; it reads RKQAQNLQGTSLSLKTAPEQRATQ. The chain crosses the membrane as a helical span at residues 239–259; that stretch reads TILMLMTFFVLMSIFDSIVSS. The Extracellular segment spans residues 260–269; sequence SRAMFLDDST. Residues 270-290 traverse the membrane as a helical segment; it reads CYSIYIFVMHIYATVSPFVFM. Residues 291 to 310 lie on the Cytoplasmic side of the membrane; that stretch reads STEKHLVNFFRSMCEWIINM.

Belongs to the G-protein coupled receptor 1 family.

The protein resides in the cell membrane. In terms of biological role, putative pheromone receptor implicated in the regulation of social and reproductive behavior. This chain is Vomeronasal type-1 receptor 47 (Vmn1r47), found in Mus musculus (Mouse).